Consider the following 492-residue polypeptide: Serine/threonine protein phosphatase 2A 57 kDa regulatory subunit B' theta isoform (492 aa).

Positions 1-63 (MWKQILSKLP…GFKEGNLKGN (63 aa)) are disordered. Residues 16–39 (KNHSSSSSSTSKSSDNGASKSGNS) are compositionally biased toward low complexity. The Microbody targeting signal signature appears at 490–492 (SSL).

This sequence belongs to the phosphatase 2A regulatory subunit B56 family. As to quaternary structure, PP2A consists of a common heteromeric enzyme, composed of a catalytic subunit (subunits C), a constant regulatory subunit (subunit A), and a variety of regulatory subunits such as subunits B (the R2/B/PR55/B55, R3/B''/PR72/PR130/PR59 and R5/B'/B56 families). Interacts with BZR1. Interacts with PP2A2, PP2A5 and PP2AA2. As to expression, highly expressed in dry seeds. Expressed in roots, cotyledons, rosette leaves and flowers.

The protein resides in the cytoplasm. Its subcellular location is the cytosol. It is found in the peroxisome. In terms of biological role, the B regulatory subunit may modulate substrate selectivity and catalytic activity, and may also direct the localization of the catalytic enzyme to a particular subcellular compartment. Associates with the serine/threonine-protein phosphatase PP2A catalytic subunit C and regulatory subunit A to positively regulates beta-oxidation of fatty acids and protoauxins in peroxisomes by dephosphorylating peroxisomal beta-oxidation-related proteins. Required for the formation of the PP2A holoenzyme that negatively regulates brassinosteroid signaling by dephosphorylating and inactivating BRI1 in the cytoplasm. In Arabidopsis thaliana (Mouse-ear cress), this protein is Serine/threonine protein phosphatase 2A 57 kDa regulatory subunit B' theta isoform (B'THETA).